The chain runs to 81 residues: Acyl carrier protein (81 aa).

Residues 4 to 79 enclose the Carrier domain; it reads SEIFGKVKDI…AAVDFIAGKV (76 aa). Serine 39 bears the O-(pantetheine 4'-phosphoryl)serine mark.

This sequence belongs to the acyl carrier protein (ACP) family. 4'-phosphopantetheine is transferred from CoA to a specific serine of apo-ACP by AcpS. This modification is essential for activity because fatty acids are bound in thioester linkage to the sulfhydryl of the prosthetic group.

Its subcellular location is the cytoplasm. Its pathway is lipid metabolism; fatty acid biosynthesis. In terms of biological role, carrier of the growing fatty acid chain in fatty acid biosynthesis. In Acaryochloris marina (strain MBIC 11017), this protein is Acyl carrier protein.